Here is a 379-residue protein sequence, read N- to C-terminus: F-box/kelch-repeat protein At4g33900 (379 aa).

An F-box domain is found at 9 to 55 (IKRFLMLPDDLVFNCLARVSRLHYPTLSLVSKKFRFLLASKELYQTR). Kelch repeat units follow at residues 116 to 175 (EIYA…TLDG), 176 to 222 (RIYV…LSIS), and 262 to 308 (SCCV…RNFK).

The protein is F-box/kelch-repeat protein At4g33900 of Arabidopsis thaliana (Mouse-ear cress).